The primary structure comprises 331 residues: Pectinesterase (331 aa).

The N-terminal stretch at 1-17 is a signal peptide; that stretch reads MVKSVLASALFAVSALA. Residue glutamine 139 coordinates substrate. Aspartate 162 acts as the Proton donor in catalysis. The active-site Nucleophile is the aspartate 183. Residues arginine 248 and tryptophan 250 each contribute to the substrate site.

Belongs to the pectinesterase family.

It is found in the secreted. The enzyme catalyses [(1-&gt;4)-alpha-D-galacturonosyl methyl ester](n) + n H2O = [(1-&gt;4)-alpha-D-galacturonosyl](n) + n methanol + n H(+). The protein operates within glycan metabolism; pectin degradation; 2-dehydro-3-deoxy-D-gluconate from pectin: step 1/5. Functionally, involved in maceration and soft-rotting of plant tissue. The sequence is that of Pectinesterase (pme1) from Aspergillus aculeatus.